A 191-amino-acid polypeptide reads, in one-letter code: Elongation factor P (191 aa).

This sequence belongs to the elongation factor P family.

Its subcellular location is the cytoplasm. Its pathway is protein biosynthesis; polypeptide chain elongation. In terms of biological role, involved in peptide bond synthesis. Stimulates efficient translation and peptide-bond synthesis on native or reconstituted 70S ribosomes in vitro. Probably functions indirectly by altering the affinity of the ribosome for aminoacyl-tRNA, thus increasing their reactivity as acceptors for peptidyl transferase. The protein is Elongation factor P of Janthinobacterium sp. (strain Marseille) (Minibacterium massiliensis).